A 545-amino-acid polypeptide reads, in one-letter code: MTLLTQSSTWQALSAHSKNVPHMRELFATDAARFNKMSLSACGLLLDYSKNKATAETLDLLFTLASNSQLEAKIKAMFAGEIINTTEKRAVLHTALRSTAEQSIIAEGQDIVPEVQQTLNKMQGFVSSVTSGQWKGYTGKAITDIVSIGIGGSFLGPKIVSQALRPYWNPELKCHFVANVDGTSISEKLKLLDPETTLFIMSSKSFGTQETLTNTLTAREWFLAKGGLQSDVAKHFVAVTSNIAKATDFGIDADNIFPMWDWVGGRYSLWSAIGLPIALLIGMDNFRALLSGAHQMDEHFANAPLTENMPVIMGLLSLWYGNFFNAQSHVVLTYDHYLRGLPAYFQQLDMESNGKSVTLNGTDVDYSTGPVIWGGEGTNGQHAYHQLLHQGTALIPADFIMPLQSHNPIGEHHDQLASNCFGQTQALMQGRTFDEALAELANSALSATEKQLIAKHKVMPGNKPSNTLLMDKLTPSTLGALIALYEHRTFVQGAIWDINSFDQWGVELGKDLGNDVLARIGATQDCDALDASSNALINLYRQGKI.

The Proton donor role is filled by glutamate 351. Catalysis depends on residues histidine 382 and lysine 510.

This sequence belongs to the GPI family.

Its subcellular location is the cytoplasm. The enzyme catalyses alpha-D-glucose 6-phosphate = beta-D-fructose 6-phosphate. It participates in carbohydrate biosynthesis; gluconeogenesis. Its pathway is carbohydrate degradation; glycolysis; D-glyceraldehyde 3-phosphate and glycerone phosphate from D-glucose: step 2/4. In terms of biological role, catalyzes the reversible isomerization of glucose-6-phosphate to fructose-6-phosphate. The protein is Glucose-6-phosphate isomerase of Shewanella baltica (strain OS185).